The primary structure comprises 339 residues: UDP-3-O-acylglucosamine N-acyltransferase (339 aa).

His238 functions as the Proton acceptor in the catalytic mechanism.

This sequence belongs to the transferase hexapeptide repeat family. LpxD subfamily. Homotrimer.

It catalyses the reaction a UDP-3-O-[(3R)-3-hydroxyacyl]-alpha-D-glucosamine + a (3R)-hydroxyacyl-[ACP] = a UDP-2-N,3-O-bis[(3R)-3-hydroxyacyl]-alpha-D-glucosamine + holo-[ACP] + H(+). It functions in the pathway bacterial outer membrane biogenesis; LPS lipid A biosynthesis. Its function is as follows. Catalyzes the N-acylation of UDP-3-O-acylglucosamine using 3-hydroxyacyl-ACP as the acyl donor. Is involved in the biosynthesis of lipid A, a phosphorylated glycolipid that anchors the lipopolysaccharide to the outer membrane of the cell. This is UDP-3-O-acylglucosamine N-acyltransferase from Aeromonas hydrophila subsp. hydrophila (strain ATCC 7966 / DSM 30187 / BCRC 13018 / CCUG 14551 / JCM 1027 / KCTC 2358 / NCIMB 9240 / NCTC 8049).